We begin with the raw amino-acid sequence, 227 residues long: Cytochrome c oxidase subunit 2 (227 aa).

Over 1–14 (MAYTFQLGLQDATS) the chain is Mitochondrial intermembrane. The chain crosses the membrane as a helical span at residues 15 to 45 (PIMEELTNFHDHTLMIVFLISSLVLYVISLM). Topologically, residues 46-59 (LTTKLTHTNTMDAQ) are mitochondrial matrix. Residues 60–87 (EVETIWTILPAVILILIALPSLRILYMM) traverse the membrane as a helical segment. Topologically, residues 88-227 (DEINNPVLTV…HFENWSASMI (140 aa)) are mitochondrial intermembrane. Cu cation-binding residues include histidine 161, cysteine 196, glutamate 198, cysteine 200, histidine 204, and methionine 207. Glutamate 198 contributes to the Mg(2+) binding site.

Belongs to the cytochrome c oxidase subunit 2 family. In terms of assembly, component of the cytochrome c oxidase (complex IV, CIV), a multisubunit enzyme composed of 14 subunits. The complex is composed of a catalytic core of 3 subunits MT-CO1, MT-CO2 and MT-CO3, encoded in the mitochondrial DNA, and 11 supernumerary subunits COX4I, COX5A, COX5B, COX6A, COX6B, COX6C, COX7A, COX7B, COX7C, COX8 and NDUFA4, which are encoded in the nuclear genome. The complex exists as a monomer or a dimer and forms supercomplexes (SCs) in the inner mitochondrial membrane with NADH-ubiquinone oxidoreductase (complex I, CI) and ubiquinol-cytochrome c oxidoreductase (cytochrome b-c1 complex, complex III, CIII), resulting in different assemblies (supercomplex SCI(1)III(2)IV(1) and megacomplex MCI(2)III(2)IV(2)). Found in a complex with TMEM177, COA6, COX18, COX20, SCO1 and SCO2. Interacts with TMEM177 in a COX20-dependent manner. Interacts with COX20. Interacts with COX16. The cofactor is Cu cation.

The protein resides in the mitochondrion inner membrane. The catalysed reaction is 4 Fe(II)-[cytochrome c] + O2 + 8 H(+)(in) = 4 Fe(III)-[cytochrome c] + 2 H2O + 4 H(+)(out). Component of the cytochrome c oxidase, the last enzyme in the mitochondrial electron transport chain which drives oxidative phosphorylation. The respiratory chain contains 3 multisubunit complexes succinate dehydrogenase (complex II, CII), ubiquinol-cytochrome c oxidoreductase (cytochrome b-c1 complex, complex III, CIII) and cytochrome c oxidase (complex IV, CIV), that cooperate to transfer electrons derived from NADH and succinate to molecular oxygen, creating an electrochemical gradient over the inner membrane that drives transmembrane transport and the ATP synthase. Cytochrome c oxidase is the component of the respiratory chain that catalyzes the reduction of oxygen to water. Electrons originating from reduced cytochrome c in the intermembrane space (IMS) are transferred via the dinuclear copper A center (CU(A)) of subunit 2 and heme A of subunit 1 to the active site in subunit 1, a binuclear center (BNC) formed by heme A3 and copper B (CU(B)). The BNC reduces molecular oxygen to 2 water molecules using 4 electrons from cytochrome c in the IMS and 4 protons from the mitochondrial matrix. This is Cytochrome c oxidase subunit 2 (MT-CO2) from Niviventer culturatus (Oldfield white-bellied rat).